A 480-amino-acid chain; its full sequence is Protein nucleotidyltransferase YdiU (480 aa).

The ATP site is built by Gly-87, Gly-89, Arg-90, Lys-110, Asp-122, Gly-123, Arg-173, and Arg-180. Asp-249 (proton acceptor) is an active-site residue. Residues Asn-250 and Asp-259 each contribute to the Mg(2+) site. An ATP-binding site is contributed by Asp-259.

This sequence belongs to the SELO family. The cofactor is Mg(2+). Mn(2+) is required as a cofactor.

The catalysed reaction is L-seryl-[protein] + ATP = 3-O-(5'-adenylyl)-L-seryl-[protein] + diphosphate. It catalyses the reaction L-threonyl-[protein] + ATP = 3-O-(5'-adenylyl)-L-threonyl-[protein] + diphosphate. The enzyme catalyses L-tyrosyl-[protein] + ATP = O-(5'-adenylyl)-L-tyrosyl-[protein] + diphosphate. It carries out the reaction L-histidyl-[protein] + UTP = N(tele)-(5'-uridylyl)-L-histidyl-[protein] + diphosphate. The catalysed reaction is L-seryl-[protein] + UTP = O-(5'-uridylyl)-L-seryl-[protein] + diphosphate. It catalyses the reaction L-tyrosyl-[protein] + UTP = O-(5'-uridylyl)-L-tyrosyl-[protein] + diphosphate. Nucleotidyltransferase involved in the post-translational modification of proteins. It can catalyze the addition of adenosine monophosphate (AMP) or uridine monophosphate (UMP) to a protein, resulting in modifications known as AMPylation and UMPylation. This Anoxybacillus flavithermus (strain DSM 21510 / WK1) protein is Protein nucleotidyltransferase YdiU.